A 157-amino-acid chain; its full sequence is GTP-dependent dephospho-CoA kinase (157 aa).

Residues aspartate 40, aspartate 59, lysine 61, glutamate 107, and aspartate 128 each contribute to the GTP site.

Belongs to the GTP-dependent DPCK family.

It catalyses the reaction 3'-dephospho-CoA + GTP = GDP + CoA + H(+). It participates in cofactor biosynthesis; coenzyme A biosynthesis. Catalyzes the GTP-dependent phosphorylation of the 3'-hydroxyl group of dephosphocoenzyme A to form coenzyme A (CoA). In Desulfurococcus amylolyticus (strain DSM 18924 / JCM 16383 / VKM B-2413 / 1221n) (Desulfurococcus kamchatkensis), this protein is GTP-dependent dephospho-CoA kinase.